A 161-amino-acid polypeptide reads, in one-letter code: Dehydrin DHN3 (161 aa).

Positions 1 to 12 (MEHGHATNRVDE) are enriched in basic and acidic residues. The interval 1-161 (MEHGHATNRV…KIKEKLPGQH (161 aa)) is disordered. Positions 20-38 (HGVGTGMGAHGGVGTGAAA) are enriched in gly residues. 2 stretches are compositionally biased toward low complexity: residues 93-107 (DQQQ…HGHT) and 115-130 (HGAT…QGHT). A run of 2 repeats spans residues 101–123 (YGQH…TGGT) and 124–144 (YGQQ…DGTG). Positions 101–144 (YGQHGHTGMTGTGEHGATATGGTYGQQGHTGMTGTGAHGTDGTG) are 2 X approximate tandem repeats. Positions 131-142 (GMTGTGAHGTDG) are enriched in gly residues. Residues 143–161 (TGEKKGIMDKIKEKLPGQH) show a composition bias toward basic and acidic residues.

This sequence belongs to the plant dehydrin family.

In Hordeum vulgare (Barley), this protein is Dehydrin DHN3 (DHN3).